A 218-amino-acid chain; its full sequence is Octanoyltransferase (218 aa).

The 176-residue stretch at 31 to 206 (REAADEVWLV…QLVKHLDYAE (176 aa)) folds into the BPL/LPL catalytic domain. Substrate is bound by residues 70–77 (RGGQVTYH), 137–139 (SLG), and 150–152 (GLA). Cys168 (acyl-thioester intermediate) is an active-site residue.

The protein belongs to the LipB family.

It localises to the cytoplasm. The catalysed reaction is octanoyl-[ACP] + L-lysyl-[protein] = N(6)-octanoyl-L-lysyl-[protein] + holo-[ACP] + H(+). It functions in the pathway protein modification; protein lipoylation via endogenous pathway; protein N(6)-(lipoyl)lysine from octanoyl-[acyl-carrier-protein]: step 1/2. Functionally, catalyzes the transfer of endogenously produced octanoic acid from octanoyl-acyl-carrier-protein onto the lipoyl domains of lipoate-dependent enzymes. Lipoyl-ACP can also act as a substrate although octanoyl-ACP is likely to be the physiological substrate. The sequence is that of Octanoyltransferase from Pseudomonas syringae pv. syringae (strain B728a).